The primary structure comprises 243 residues: MADAEDSRHSKNEGFPNTSLITEKLDLLDLFGSPKVKTEREGRPARLLEGLSAVNAETAFVKTHPLQHEWTLWFLKPPTQGLEWSDLLKEIISFKTVEEFWGIFKTISKASMLPAKSDYSYFLKGIRPEWEDPQNMNGGKWAYQSKHKGSNLDELWLYMVLAAIGETLDPTGKEVTGVVCNMRKGFYRIAVWTRNCNDKDVLEKIGLRFKEVLGISDKETIEYSAHEDSSKAGSMRAKTRMSL.

It belongs to the eukaryotic initiation factor 4E family. As to quaternary structure, eIF4F is a multi-subunit complex, the composition of which varies with external and internal environmental conditions. It is composed of at least eIF4A, eIF4E and eIF4G. eIF4E is also known to interact with other partners.

Functionally, recognizes and binds the 7-methylguanosine-containing mRNA cap during an early step in the initiation of protein synthesis and facilitates ribosome binding by inducing the unwinding of the mRNAs secondary structures. In Schizosaccharomyces pombe (strain 972 / ATCC 24843) (Fission yeast), this protein is Eukaryotic translation initiation factor 4E-2 (tif452).